The following is a 236-amino-acid chain: Large ribosomal subunit protein uL1 (236 aa).

It belongs to the universal ribosomal protein uL1 family. In terms of assembly, part of the 50S ribosomal subunit.

In terms of biological role, binds directly to 23S rRNA. The L1 stalk is quite mobile in the ribosome, and is involved in E site tRNA release. Protein L1 is also a translational repressor protein, it controls the translation of the L11 operon by binding to its mRNA. This Kocuria rhizophila (strain ATCC 9341 / DSM 348 / NBRC 103217 / DC2201) protein is Large ribosomal subunit protein uL1.